Reading from the N-terminus, the 629-residue chain is (-)-alpha-pinene synthase, chloroplastic (629 aa).

The transit peptide at 1-48 directs the protein to the chloroplast; the sequence is MSPVSVISLPSDLCLPTSFIDRSGRELIPLHITIPNVAMRRQGKLMTR. Residues D380, D384, and D532 each contribute to the Mg(2+) site. The DDXXD motif signature appears at 380 to 384; sequence DDMYD. S540 contributes to the K(+) binding site.

This sequence belongs to the terpene synthase family. Tpsd subfamily. Mg(2+) is required as a cofactor. It depends on Mn(2+) as a cofactor. K(+) serves as cofactor.

Its subcellular location is the plastid. It is found in the chloroplast. The enzyme catalyses (2E)-geranyl diphosphate = (1S,5S)-alpha-pinene + diphosphate. It participates in terpene metabolism; oleoresin biosynthesis. Its function is as follows. Involved in defensive oleoresin formation in conifers in response to insect attack or other injury. Involved in monoterpene (C10) olefins biosynthesis. Produces mainly (-)-alpha-pinene (79%) and lesser amounts of (-)-beta-pinene (4.2%), nearly racemic mixtures of camphene (2.8% (+)/2.2% (-)) and limonene (2.4% (+)/3.7% (-)), as well as small amounts of (+)-alpha-pinene (3.3%) and (+)-beta-pinene (2.4%). This chain is (-)-alpha-pinene synthase, chloroplastic (PT1), found in Pinus taeda (Loblolly pine).